Here is a 276-residue protein sequence, read N- to C-terminus: Adenylate kinase (276 aa).

51 to 56 is a binding site for ATP; that stretch reads GAGKGT. Residues 71 to 100 are NMP; the sequence is ATGDMLRSQVAKKTPLGQAAKKIMDAGGLV. AMP is bound by residues Thr-72, Arg-77, 98–100, 127–130, and Gln-134; these read GLV and GFPR. Positions 168 to 205 are LID; that stretch reads GRLVHPASGRSYHVKFNPPKKEMTDDITGEPLIQRSDD. ATP contacts are provided by residues Arg-169 and 178–179; that span reads SY. Residues Arg-202 and Arg-213 each coordinate AMP. Residue Gln-241 participates in ATP binding.

This sequence belongs to the adenylate kinase family. AK2 subfamily. Monomer.

Its subcellular location is the cytoplasm. It is found in the cytosol. It localises to the mitochondrion intermembrane space. The enzyme catalyses AMP + ATP = 2 ADP. In terms of biological role, catalyzes the reversible transfer of the terminal phosphate group between ATP and AMP. Plays an important role in cellular energy homeostasis and in adenine nucleotide metabolism. Adenylate kinase activity is critical for regulation of the phosphate utilization and the AMP de novo biosynthesis pathways. This chain is Adenylate kinase, found in Podospora anserina (strain S / ATCC MYA-4624 / DSM 980 / FGSC 10383) (Pleurage anserina).